A 1151-amino-acid chain; its full sequence is Ankyrin and IPT/TIG repeat-containing protein C26H5.05 (1151 aa).

Disordered stretches follow at residues N77–L104, K452–R511, and Q516–E535. Residues S87–Q98 show a composition bias toward polar residues. Residues K452–G463 show a composition bias toward basic and acidic residues. Composition is skewed to polar residues over residues K464 to P496 and L517 to K532. One can recognise an IPT/TIG domain in the interval P658 to Y739. 2 ANK repeats span residues S861–K890 and L894–V923. Residues P1041–D1067 form a disordered region. Over residues S1058–D1067 the composition is skewed to basic and acidic residues. A helical membrane pass occupies residues M1113–L1133.

Its subcellular location is the vacuole membrane. The sequence is that of Ankyrin and IPT/TIG repeat-containing protein C26H5.05 from Schizosaccharomyces pombe (strain 972 / ATCC 24843) (Fission yeast).